The following is a 157-amino-acid chain: 2-C-methyl-D-erythritol 2,4-cyclodiphosphate synthase (157 aa).

2 residues coordinate a divalent metal cation: aspartate 8 and histidine 10. Residues aspartate 8 to histidine 10 and histidine 34 to serine 35 each bind 4-CDP-2-C-methyl-D-erythritol 2-phosphate. Histidine 42 is a binding site for a divalent metal cation. 4-CDP-2-C-methyl-D-erythritol 2-phosphate contacts are provided by residues aspartate 56–glycine 58, phenylalanine 61–aspartate 65, alanine 100–alanine 106, threonine 132–glutamate 135, phenylalanine 139, and arginine 142.

This sequence belongs to the IspF family. As to quaternary structure, homotrimer. It depends on a divalent metal cation as a cofactor.

It carries out the reaction 4-CDP-2-C-methyl-D-erythritol 2-phosphate = 2-C-methyl-D-erythritol 2,4-cyclic diphosphate + CMP. It participates in isoprenoid biosynthesis; isopentenyl diphosphate biosynthesis via DXP pathway; isopentenyl diphosphate from 1-deoxy-D-xylulose 5-phosphate: step 4/6. Its function is as follows. Involved in the biosynthesis of isopentenyl diphosphate (IPP) and dimethylallyl diphosphate (DMAPP), two major building blocks of isoprenoid compounds. Catalyzes the conversion of 4-diphosphocytidyl-2-C-methyl-D-erythritol 2-phosphate (CDP-ME2P) to 2-C-methyl-D-erythritol 2,4-cyclodiphosphate (ME-CPP) with a corresponding release of cytidine 5-monophosphate (CMP). This is 2-C-methyl-D-erythritol 2,4-cyclodiphosphate synthase from Geobacter sulfurreducens (strain ATCC 51573 / DSM 12127 / PCA).